A 614-amino-acid polypeptide reads, in one-letter code: Dihydroxy-acid dehydratase (614 aa).

Asp81 contacts Mg(2+). A [2Fe-2S] cluster-binding site is contributed by Cys122. Residues Asp123 and Lys124 each contribute to the Mg(2+) site. Lys124 is subject to N6-carboxylysine. Cys196 is a binding site for [2Fe-2S] cluster. Residue Glu492 participates in Mg(2+) binding. Residue Ser518 is the Proton acceptor of the active site.

It belongs to the IlvD/Edd family. As to quaternary structure, homodimer. [2Fe-2S] cluster is required as a cofactor. It depends on Mg(2+) as a cofactor.

The enzyme catalyses (2R)-2,3-dihydroxy-3-methylbutanoate = 3-methyl-2-oxobutanoate + H2O. It carries out the reaction (2R,3R)-2,3-dihydroxy-3-methylpentanoate = (S)-3-methyl-2-oxopentanoate + H2O. Its pathway is amino-acid biosynthesis; L-isoleucine biosynthesis; L-isoleucine from 2-oxobutanoate: step 3/4. It functions in the pathway amino-acid biosynthesis; L-valine biosynthesis; L-valine from pyruvate: step 3/4. Functions in the biosynthesis of branched-chain amino acids. Catalyzes the dehydration of (2R,3R)-2,3-dihydroxy-3-methylpentanoate (2,3-dihydroxy-3-methylvalerate) into 2-oxo-3-methylpentanoate (2-oxo-3-methylvalerate) and of (2R)-2,3-dihydroxy-3-methylbutanoate (2,3-dihydroxyisovalerate) into 2-oxo-3-methylbutanoate (2-oxoisovalerate), the penultimate precursor to L-isoleucine and L-valine, respectively. The polypeptide is Dihydroxy-acid dehydratase (Ruegeria sp. (strain TM1040) (Silicibacter sp.)).